A 163-amino-acid chain; its full sequence is Staphylokinase (163 aa).

Residues M1 to A27 form the signal peptide.

Belongs to the staphylokinase family.

It is found in the secreted. Potent plasminogen activator that converts plasminogen into plasmin. It forms a 1:1 complex with plasmin, which in turn activates other plasminogen molecules. The sequence is that of Staphylokinase from Staphylococcus phage S phi-C (Bacteriophage S phi-C).